The following is a 341-amino-acid chain: Platelet-activating factor receptor (341 aa).

Over 1-16 (MEQNGSFRVDSEFRYT) the chain is Extracellular. Asparagine 4 carries an N-linked (GlcNAc...) asparagine glycan. The helical transmembrane segment at 17-38 (LFPIVYSVIFVLGVVANGYVLW) threads the bilayer. Residues 39–54 (VFATLYPSKKLNEIKI) are Cytoplasmic-facing. A helical transmembrane segment spans residues 55–74 (FMVNLTVADLLFLMTLPLWI). Topologically, residues 75–91 (VYYSNEGDWIVHKFLCN) are extracellular. Residues cysteine 90 and cysteine 173 are joined by a disulfide bond. Residues 92 to 113 (LAGCLFFINTYCSVAFLGVITY) form a helical membrane-spanning segment. Over 114–133 (NRYQAVAYPIKTAQATTRKR) the chain is Cytoplasmic. The chain crosses the membrane as a helical span at residues 134–155 (GITLSLVIWISIAATASYFLAT). Residues 156–184 (DSTNVVPKKDGSGNITRCFEHYEPYSVPI) are Extracellular-facing. N-linked (GlcNAc...) asparagine glycosylation occurs at asparagine 169. Residues 185–205 (LVVHIFITSCFFLVFFLIFYC) form a helical membrane-spanning segment. The Cytoplasmic segment spans residues 206-233 (NMVIIHTLLTRPVRQQRKPEVKRRALWM). Residues 234-254 (VCTVLAVFVICFVPHHVVQLP) traverse the membrane as a helical segment. At 255–275 (WTLAELGYQTNFHQAINDAHQ) the chain is on the extracellular side. The helical transmembrane segment at 276–295 (ITLCLLSTNCVLDPVIYCFL) threads the bilayer. The Cytoplasmic segment spans residues 296–341 (TKKFRKHLSEKFYSMRSSRKCSRATSDTCTEVMMPANQTPVLPLKN).

The protein belongs to the G-protein coupled receptor 1 family. Interacts with ARRB1. As to expression, present in almost all organs including spleen, small intestine, kidney, lung, liver and brain.

Its subcellular location is the cell membrane. Functionally, receptor for platelet activating factor, a chemotactic phospholipid mediator that possesses potent inflammatory, smooth-muscle contractile and hypotensive activity. Seems to mediate its action via a G protein that activates a phosphatidylinositol-calcium second messenger system. In Rattus norvegicus (Rat), this protein is Platelet-activating factor receptor (Ptafr).